Here is a 230-residue protein sequence, read N- to C-terminus: Small ribosomal subunit protein uS3 (230 aa).

Residues 39 to 107 (VRNYLRQKLA…PIHVNIEEIR (69 aa)) form the KH type-2 domain. A disordered region spans residues 210 to 230 (SSKPEHESKQRKAGRRNAAAN).

This sequence belongs to the universal ribosomal protein uS3 family. In terms of assembly, part of the 30S ribosomal subunit. Forms a tight complex with proteins S10 and S14.

Binds the lower part of the 30S subunit head. Binds mRNA in the 70S ribosome, positioning it for translation. The sequence is that of Small ribosomal subunit protein uS3 from Neisseria gonorrhoeae (strain ATCC 700825 / FA 1090).